A 485-amino-acid polypeptide reads, in one-letter code: Glutamate--tRNA ligase (485 aa).

Residues 11–21 carry the 'HIGH' region motif; it reads PSPTGLLHIGN. The 'KMSKS' region motif lies at 255–259; sequence KLSKR. Position 258 (K258) interacts with ATP.

The protein belongs to the class-I aminoacyl-tRNA synthetase family. Glutamate--tRNA ligase type 1 subfamily. In terms of assembly, monomer.

It is found in the cytoplasm. It carries out the reaction tRNA(Glu) + L-glutamate + ATP = L-glutamyl-tRNA(Glu) + AMP + diphosphate. Catalyzes the attachment of glutamate to tRNA(Glu) in a two-step reaction: glutamate is first activated by ATP to form Glu-AMP and then transferred to the acceptor end of tRNA(Glu). The sequence is that of Glutamate--tRNA ligase from Streptococcus mutans serotype c (strain ATCC 700610 / UA159).